Consider the following 341-residue polypeptide: L-threonine 3-dehydrogenase (341 aa).

Cys38 is a binding site for Zn(2+). Residues Thr40 and His43 each act as charge relay system in the active site. Positions 63, 64, 93, 96, 99, and 107 each coordinate Zn(2+). Residues Ile175, Asp195, Arg200, 262–264 (LGI), and 286–287 (IY) contribute to the NAD(+) site.

It belongs to the zinc-containing alcohol dehydrogenase family. In terms of assembly, homotetramer. It depends on Zn(2+) as a cofactor.

Its subcellular location is the cytoplasm. The catalysed reaction is L-threonine + NAD(+) = (2S)-2-amino-3-oxobutanoate + NADH + H(+). The protein operates within amino-acid degradation; L-threonine degradation via oxydo-reductase pathway; glycine from L-threonine: step 1/2. Functionally, catalyzes the NAD(+)-dependent oxidation of L-threonine to 2-amino-3-ketobutyrate. This chain is L-threonine 3-dehydrogenase, found in Salmonella arizonae (strain ATCC BAA-731 / CDC346-86 / RSK2980).